The following is a 342-amino-acid chain: Aristolochene synthase (342 aa).

Positions 115, 244, 248, and 252 each coordinate Mg(2+). Positions 340 and 341 each coordinate (2E,6E)-farnesyl diphosphate.

This sequence belongs to the terpene synthase family. In terms of assembly, homodimer. Mg(2+) is required as a cofactor.

It carries out the reaction (2E,6E)-farnesyl diphosphate = (+)-aristolochene + diphosphate. The protein operates within sesquiterpene biosynthesis; aristolochene biosynthesis; aristolochene from farnesyl diphosphate: step 1/1. In terms of biological role, aristolochene synthase; part of the gene cluster that mediates the biosynthesis of PR-toxin, a bicyclic sesquiterpene belonging to the eremophilane class and acting as a mycotoxin. The first step of the pathway is catalyzed by the aristolochene synthase which performs the cyclization of trans,trans-farnesyl diphosphate (FPP) to the bicyclic sesquiterpene aristolochene. Following the formation of aristolochene, the non-oxygenated aristolochene is converted to the trioxygenated intermediate eremofortin B, via 7-epi-neopetasone. This conversion appears to involve three enzymes, a hydroxysterol oxidase-like enzyme, the quinone-oxidase prx3 that forms the quinone-type-structure in the bicyclic nucleus of aristolochene with the C8-oxo group and the C-3 hydroxyl group, and the P450 monooxygenase ORF6 that introduces the epoxide at the double bond between carbons 1 and 2. No monoxy or dioxy-intermediates have been reported to be released to the broth, so these three early oxidative reactions may be coupled together. Eremofortin B is further oxidized by another P450 monooxygenase, that introduces a second epoxide between carbons 7 and 11 prior to acetylation to eremofortin A by the acetyltransferase ORF8. The second epoxidation may be performed by a second P450 monooxygenase. After the acetylation step, eremofortin A is converted to eremofortin C and then to PR-toxin. First the conversion of eremofortin A to eremofortin C proceeds by oxidation of the side chain of the molecule at C-12 and is catalyzed by the short-chain oxidoreductase prx1. The cytochrome P450 monooxygenase ORF5 also plays a role in this step. The primary alcohol formed at C-12 is finally oxidized by the short-chain alcohol dehydrogenase prx4 that forms PR-toxin. The chain is Aristolochene synthase from Penicillium roqueforti (strain FM164).